The chain runs to 350 residues: Phenylalanine--tRNA ligase alpha subunit (350 aa).

Position 271 (Glu271) interacts with Mg(2+).

It belongs to the class-II aminoacyl-tRNA synthetase family. Phe-tRNA synthetase alpha subunit type 1 subfamily. As to quaternary structure, tetramer of two alpha and two beta subunits. Requires Mg(2+) as cofactor.

The protein localises to the cytoplasm. It carries out the reaction tRNA(Phe) + L-phenylalanine + ATP = L-phenylalanyl-tRNA(Phe) + AMP + diphosphate + H(+). The sequence is that of Phenylalanine--tRNA ligase alpha subunit from Delftia acidovorans (strain DSM 14801 / SPH-1).